Consider the following 381-residue polypeptide: Cobalt-precorrin-5B C(1)-methyltransferase (381 aa).

Belongs to the CbiD family.

The enzyme catalyses Co-precorrin-5B + S-adenosyl-L-methionine = Co-precorrin-6A + S-adenosyl-L-homocysteine. The protein operates within cofactor biosynthesis; adenosylcobalamin biosynthesis; cob(II)yrinate a,c-diamide from sirohydrochlorin (anaerobic route): step 6/10. Catalyzes the methylation of C-1 in cobalt-precorrin-5B to form cobalt-precorrin-6A. The protein is Cobalt-precorrin-5B C(1)-methyltransferase of Clostridium botulinum (strain Alaska E43 / Type E3).